A 78-amino-acid polypeptide reads, in one-letter code: Small ribosomal subunit protein bS18 (78 aa).

This sequence belongs to the bacterial ribosomal protein bS18 family. As to quaternary structure, part of the 30S ribosomal subunit. Forms a tight heterodimer with protein bS6.

Its function is as follows. Binds as a heterodimer with protein bS6 to the central domain of the 16S rRNA, where it helps stabilize the platform of the 30S subunit. The chain is Small ribosomal subunit protein bS18 from Geobacillus kaustophilus (strain HTA426).